The primary structure comprises 834 residues: Leucine--tRNA ligase (834 aa).

The 'HIGH' region signature appears at 42–52 (PYPSGKLHMGH). Positions 619 to 623 (KMSKS) match the 'KMSKS' region motif. Lysine 622 contacts ATP.

Belongs to the class-I aminoacyl-tRNA synthetase family.

It localises to the cytoplasm. It catalyses the reaction tRNA(Leu) + L-leucine + ATP = L-leucyl-tRNA(Leu) + AMP + diphosphate. The protein is Leucine--tRNA ligase of Actinobacillus pleuropneumoniae serotype 7 (strain AP76).